The chain runs to 444 residues: Tryptophan 5-hydroxylase 1 (444 aa).

Residues 19 to 94 (TLIFSLKNEV…TVLSVDSPDQ (76 aa)) enclose the ACT domain. Residue Ser58 is modified to Phosphoserine; by PKA. L-tryptophan is bound by residues Tyr235, Arg257, and Thr265. Positions 272, 277, and 317 each coordinate Fe cation. L-tryptophan contacts are provided by Ser336 and Ile366.

The protein belongs to the biopterin-dependent aromatic amino acid hydroxylase family. In terms of assembly, homotetramer. Interacts with DNAJC12. Fe(2+) is required as a cofactor. In terms of processing, ubiquitinated, leading to its degradation by the proteasome. Ubiquitinated is triggered by phosphorylation. Post-translationally, phosphorylated; triggering degradation by the proteasome.

The catalysed reaction is (6R)-L-erythro-5,6,7,8-tetrahydrobiopterin + L-tryptophan + O2 = 5-hydroxy-L-tryptophan + (4aS,6R)-4a-hydroxy-L-erythro-5,6,7,8-tetrahydrobiopterin. It participates in aromatic compound metabolism; serotonin biosynthesis; serotonin from L-tryptophan: step 1/2. Oxidizes L-tryptophan to 5-hydroxy-l-tryptophan in the rate-determining step of serotonin biosynthesis. The polypeptide is Tryptophan 5-hydroxylase 1 (Tph1) (Rattus norvegicus (Rat)).